Reading from the N-terminus, the 503-residue chain is 2-(3-amino-3-carboxypropyl)histidine synthase subunit 2 (503 aa).

Residues C93, C114, and C334 each coordinate [4Fe-4S] cluster. Residues G464–K503 are disordered. Positions G492–K503 are enriched in basic and acidic residues.

It belongs to the DPH1/DPH2 family. DPH2 subfamily. In terms of assembly, component of the 2-(3-amino-3-carboxypropyl)histidine synthase complex composed of dph1, dph2, dph3 and a NADH-dependent reductase, predominantly cbr1. [4Fe-4S] cluster is required as a cofactor.

The protein localises to the cytoplasm. It functions in the pathway protein modification; peptidyl-diphthamide biosynthesis. In terms of biological role, required for the first step of diphthamide biosynthesis, a post-translational modification of histidine which occurs in elongation factor 2. Dph1 and dph2 transfer a 3-amino-3-carboxypropyl (ACP) group from S-adenosyl-L-methionine (SAM) to a histidine residue, the reaction is assisted by a reduction system comprising dph3 and a NADH-dependent reductase, predominantly cbr1. Facilitates the reduction of the catalytic iron-sulfur cluster found in the dph1 subunit. The polypeptide is 2-(3-amino-3-carboxypropyl)histidine synthase subunit 2 (Schizosaccharomyces pombe (strain 972 / ATCC 24843) (Fission yeast)).